The following is a 422-amino-acid chain: Serine--tRNA ligase (422 aa).

Position 227–229 (227–229 (TSE)) interacts with L-serine. ATP-binding positions include 258–260 (RRE) and V274. L-serine is bound at residue E281. 345 to 348 (ELTS) contacts ATP. T380 contributes to the L-serine binding site.

This sequence belongs to the class-II aminoacyl-tRNA synthetase family. Type-1 seryl-tRNA synthetase subfamily. As to quaternary structure, homodimer. The tRNA molecule binds across the dimer.

The protein resides in the cytoplasm. It carries out the reaction tRNA(Ser) + L-serine + ATP = L-seryl-tRNA(Ser) + AMP + diphosphate + H(+). The enzyme catalyses tRNA(Sec) + L-serine + ATP = L-seryl-tRNA(Sec) + AMP + diphosphate + H(+). Its pathway is aminoacyl-tRNA biosynthesis; selenocysteinyl-tRNA(Sec) biosynthesis; L-seryl-tRNA(Sec) from L-serine and tRNA(Sec): step 1/1. Catalyzes the attachment of serine to tRNA(Ser). Is also able to aminoacylate tRNA(Sec) with serine, to form the misacylated tRNA L-seryl-tRNA(Sec), which will be further converted into selenocysteinyl-tRNA(Sec). The polypeptide is Serine--tRNA ligase (Thermobifida fusca (strain YX)).